Consider the following 338-residue polypeptide: Anthranilate phosphoribosyltransferase (338 aa).

5-phospho-alpha-D-ribose 1-diphosphate is bound by residues Gly-81, 84–85 (GD), Thr-89, 91–94 (NVST), 109–117 (KHGNRALSS), and Ala-121. Residue Gly-81 participates in anthranilate binding. Ser-93 is a binding site for Mg(2+). Asn-112 provides a ligand contact to anthranilate. Anthranilate is bound at residue Arg-167. Asp-225 and Glu-226 together coordinate Mg(2+).

Belongs to the anthranilate phosphoribosyltransferase family. Homodimer. The cofactor is Mg(2+).

The enzyme catalyses N-(5-phospho-beta-D-ribosyl)anthranilate + diphosphate = 5-phospho-alpha-D-ribose 1-diphosphate + anthranilate. It functions in the pathway amino-acid biosynthesis; L-tryptophan biosynthesis; L-tryptophan from chorismate: step 2/5. Functionally, catalyzes the transfer of the phosphoribosyl group of 5-phosphorylribose-1-pyrophosphate (PRPP) to anthranilate to yield N-(5'-phosphoribosyl)-anthranilate (PRA). This chain is Anthranilate phosphoribosyltransferase, found in Chelativorans sp. (strain BNC1).